Reading from the N-terminus, the 1380-residue chain is DNA-directed RNA polymerase subunit beta (1380 aa).

This sequence belongs to the RNA polymerase beta chain family. In terms of assembly, the RNAP catalytic core consists of 2 alpha, 1 beta, 1 beta' and 1 omega subunit. When a sigma factor is associated with the core the holoenzyme is formed, which can initiate transcription.

It carries out the reaction RNA(n) + a ribonucleoside 5'-triphosphate = RNA(n+1) + diphosphate. Its function is as follows. DNA-dependent RNA polymerase catalyzes the transcription of DNA into RNA using the four ribonucleoside triphosphates as substrates. The protein is DNA-directed RNA polymerase subunit beta of Alcanivorax borkumensis (strain ATCC 700651 / DSM 11573 / NCIMB 13689 / SK2).